Reading from the N-terminus, the 385-residue chain is 8-amino-7-oxononanoate synthase (385 aa).

Position 21 (arginine 21) interacts with substrate. 108–109 (GF) contacts pyridoxal 5'-phosphate. Histidine 133 serves as a coordination point for substrate. Residues serine 179, histidine 207, and threonine 233 each coordinate pyridoxal 5'-phosphate. Lysine 236 is modified (N6-(pyridoxal phosphate)lysine). A substrate-binding site is contributed by threonine 352.

It belongs to the class-II pyridoxal-phosphate-dependent aminotransferase family. BioF subfamily. As to quaternary structure, homodimer. The cofactor is pyridoxal 5'-phosphate.

It catalyses the reaction 6-carboxyhexanoyl-[ACP] + L-alanine + H(+) = (8S)-8-amino-7-oxononanoate + holo-[ACP] + CO2. The protein operates within cofactor biosynthesis; biotin biosynthesis. Functionally, catalyzes the decarboxylative condensation of pimeloyl-[acyl-carrier protein] and L-alanine to produce 8-amino-7-oxononanoate (AON), [acyl-carrier protein], and carbon dioxide. In Salmonella dublin (strain CT_02021853), this protein is 8-amino-7-oxononanoate synthase.